Here is a 329-residue protein sequence, read N- to C-terminus: Indolepyruvate C-methyltransferase (329 aa).

The protein belongs to the methyltransferase superfamily.

It catalyses the reaction indole-3-pyruvate + S-adenosyl-L-methionine = (R)-3-(indol-3-yl)-2-oxobutanoate + S-adenosyl-L-homocysteine + H(+). Strongly inhibited by the thiol reagents p-chloromercuribenzoate and N-ethylmaleimide. Partially inhibited by o-phenanthroline and 2,2'-dipyridyl. Competitively inhibited by L-tryptophan and indolmycin. Functionally, involved in the biosynthesis of the antibiotic indolmycin, an inhibitor of the bacterial tryptophan-tRNA synthetases. Catalyzes the transfer of a methyl group from S-adenosyl-L-methionine to position 3 of the aliphatic side chain of (indol-3-yl)pyruvate to yield 3-methylindolepyruvate. This Streptomyces griseus protein is Indolepyruvate C-methyltransferase.